Reading from the N-terminus, the 166-residue chain is Protein-export protein SecB (166 aa).

It belongs to the SecB family. Homotetramer, a dimer of dimers. One homotetramer interacts with 1 SecA dimer.

It localises to the cytoplasm. One of the proteins required for the normal export of preproteins out of the cell cytoplasm. It is a molecular chaperone that binds to a subset of precursor proteins, maintaining them in a translocation-competent state. It also specifically binds to its receptor SecA. This chain is Protein-export protein SecB, found in Roseobacter denitrificans (strain ATCC 33942 / OCh 114) (Erythrobacter sp. (strain OCh 114)).